Consider the following 226-residue polypeptide: uncharacterized protein (226 aa).

A helical transmembrane segment spans residues 203 to 225; that stretch reads FGISDIYTSTLSFGLIISLFYLL.

It localises to the membrane. This is an uncharacterized protein from Acanthamoeba polyphaga (Amoeba).